The following is a 588-amino-acid chain: Tannase (588 aa).

The first 18 residues, Met-1–Ala-18, serve as a signal peptide directing secretion. 3 cysteine pairs are disulfide-bonded: Cys-25–Cys-71, Cys-194–Cys-502, and Cys-261–Cys-278. Ser-195 functions as the Acyl-ester intermediate in the catalytic mechanism. 4 residues coordinate Ca(2+): Asp-262, Asp-265, Asp-269, and Val-271. Gln-317 bears the Pyrrolidone carboxylic acid mark. Active-site charge relay system residues include Asp-455 and His-501.

Belongs to the tannase family. Heterooctamer of 4 33 kDa and 4 30 kDa subunits linked by disulfide bond(s). Post-translationally, the protein is glycosylated to a carbohydrate content of 22.7%. In terms of processing, the N-terminus of the 30 kDa subunit is blocked.

The catalysed reaction is digallate + H2O = 2 3,4,5-trihydroxybenzoate + H(+). In terms of biological role, hydrolyzes ester bonds of tannic acid to produce gallic acid and glucose. The protein is Tannase of Aspergillus oryzae (strain ATCC 42149 / RIB 40) (Yellow koji mold).